Consider the following 357-residue polypeptide: Aminomethyltransferase (357 aa).

The protein belongs to the GcvT family. As to quaternary structure, the glycine cleavage system is composed of four proteins: P, T, L and H.

It carries out the reaction N(6)-[(R)-S(8)-aminomethyldihydrolipoyl]-L-lysyl-[protein] + (6S)-5,6,7,8-tetrahydrofolate = N(6)-[(R)-dihydrolipoyl]-L-lysyl-[protein] + (6R)-5,10-methylene-5,6,7,8-tetrahydrofolate + NH4(+). Its function is as follows. The glycine cleavage system catalyzes the degradation of glycine. This Deinococcus deserti (strain DSM 17065 / CIP 109153 / LMG 22923 / VCD115) protein is Aminomethyltransferase.